The chain runs to 906 residues: Cadherin-2A (906 aa).

An N-terminal signal peptide occupies residues 1-28 (MCRKEPFLLPTALCILAALVLHQGPVEA). The propeptide occupies 29-160 (LGGSRLCKTG…KHNGLQRQKR (132 aa)). Cadherin domains lie at 161-268 (DWVI…RPEF), 269-383 (LHQI…PPEF), 384-498 (TAMT…NPYF), 499-604 (TPNP…DNAP), and 605-714 (YVYP…TTAP). Residues 161-724 (DWVIPPINVP…IIGTGLGTGA (564 aa)) lie on the Extracellular side of the membrane. Ca(2+) is bound by residues Glu-171, Asp-227, Glu-229, Asp-260, Met-261, Asn-262, Asp-263, and Asn-264. Asn-274 carries an N-linked (GlcNAc...) asparagine glycan. Positions 294, 296, and 302 each coordinate Ca(2+). Residue Asn-326 is glycosylated (N-linked (GlcNAc...) asparagine). Asp-354 is a binding site for Ca(2+). Residues Asn-403, Asn-573, Asn-623, Asn-652, and Asn-693 are each glycosylated (N-linked (GlcNAc...) asparagine). A helical transmembrane segment spans residues 725-746 (IIAILLCIIILLTLVLMFVVWM). At 747-906 (KRRDKERQAK…LADMYGGSDD (160 aa)) the chain is on the cytoplasmic side. 2 disordered regions span residues 775–800 (EEGG…EPDT) and 863–884 (SGST…EQDY). Residues 776 to 785 (EGGGEEDQDY) show a composition bias toward acidic residues. Positions 863–880 (SGSTAGSLSSLNSSSSGG) are enriched in low complexity.

As to quaternary structure, homodimer (via extracellular region). Can also form heterodimers with other cadherins (via extracellular region). Dimerization occurs in trans, i.e. with a cadherin chain from another cell.

The protein resides in the cell membrane. Its subcellular location is the sarcolemma. It localises to the cell junction. The protein localises to the cell surface. It is found in the desmosome. The protein resides in the adherens junction. In terms of biological role, calcium-dependent cell adhesion protein; preferentially mediates homotypic cell-cell adhesion. Cadherins may thus contribute to the sorting of heterogeneous cell types, and thereby play an important role during embryonic development. Required for proper neurite branching. Required for pre- and postsynaptic organization. In Xenopus laevis (African clawed frog), this protein is Cadherin-2A (cdh2-a).